We begin with the raw amino-acid sequence, 101 residues long: Capsid assembly scaffolding protein (101 aa).

The disordered stretch occupies residues 1 to 24; that stretch reads MPMERDSHEEILNKLNDPELEHSE. Residues 79–99 adopt a coiled-coil conformation; that stretch reads EEIKQEELSETITIEDLEKQA.

The protein belongs to the phi29likevirus scaffolding protein family. Homodimer. Interacts non-specifically with DNA; probably binds DNA in the early stages of DNA packaging.

Scaffolding protein involved in the icosahedric procapsid assembly. Coassembles with the capsid proteins to form the procapsid. The scaffolding protein is found within the capsid as a serie of concentric shells. During DNA packaging, the scaffolding protein molecules are released from the procapsid. The polypeptide is Capsid assembly scaffolding protein (7) (Bacillus subtilis (Bacteriophage B103)).